Reading from the N-terminus, the 327-residue chain is Arabinose 5-phosphate isomerase KpsF (327 aa).

The SIS domain maps to 48 to 191 (VLNLIMNCKG…AIAMIHQRKF (144 aa)). 63–68 (GMGKSG) is a binding site for ATP. Residues 82–83 (GT), histidine 89, histidine 95, 121–130 (KLVPSLKNFG), and 155–157 (HMA) contribute to the substrate site. Zn(2+) is bound at residue histidine 89. 2 consecutive CBS domains span residues 217-273 (MQHD…EGSL) and 282-327 (MTRE…RIFD).

Homotetramer.

The catalysed reaction is D-arabinose 5-phosphate = D-ribulose 5-phosphate. With respect to regulation, inhibited by 10 uM zinc, cadmium or mercury ions. Its function is as follows. Involved in the biosynthesis of K-antigen capsules. Catalyzes the reversible aldol-ketol isomerization between D-ribulose 5-phosphate (Ru5P) and D-arabinose 5-phosphate (A5P). This Escherichia coli O6:H1 (strain CFT073 / ATCC 700928 / UPEC) protein is Arabinose 5-phosphate isomerase KpsF.